The sequence spans 365 residues: Ribosomal RNA large subunit methyltransferase F (365 aa).

Composition is skewed to low complexity over residues 1 to 18 (MPKP…SPAG) and 30 to 42 (AKLK…AASK). Positions 1-50 (MPKPAIKTAAKPATSPAGKRAKPNTPQSVAKLKASTAKAASKPKAKLGEK) are disordered.

The protein belongs to the methyltransferase superfamily. METTL16/RlmF family.

Its subcellular location is the cytoplasm. It catalyses the reaction adenosine(1618) in 23S rRNA + S-adenosyl-L-methionine = N(6)-methyladenosine(1618) in 23S rRNA + S-adenosyl-L-homocysteine + H(+). Its function is as follows. Specifically methylates the adenine in position 1618 of 23S rRNA. This is Ribosomal RNA large subunit methyltransferase F from Shewanella oneidensis (strain ATCC 700550 / JCM 31522 / CIP 106686 / LMG 19005 / NCIMB 14063 / MR-1).